Reading from the N-terminus, the 661-residue chain is Pseudouridylate synthase 7 homolog (661 aa).

At Met1 the chain carries N-acetylmethionine. Positions 1 to 97 (MEMTEMTGVS…GLSEECEEEE (97 aa)) are disordered. Ser10 is modified (phosphoserine). Residues 36 to 52 (SECSLTKGQDGLQNDFL) are compositionally biased toward polar residues. Positions 77–97 (QLEDEEEEEEDGLSEECEEEE) are enriched in acidic residues. Ser127 carries the post-translational modification Phosphoserine. Asp294 acts as the Nucleophile in catalysis. The TRUD domain maps to 370 to 580 (GFINYYGMQR…SGAYRKIIIR (211 aa)). Thr610 is modified (phosphothreonine).

This sequence belongs to the pseudouridine synthase TruD family. Interacts with SIRT1.

It is found in the nucleus. The enzyme catalyses a uridine in tRNA = a pseudouridine in tRNA. The catalysed reaction is uridine(13) in tRNA = pseudouridine(13) in tRNA. It carries out the reaction a uridine in mRNA = a pseudouridine in mRNA. Its function is as follows. Pseudouridylate synthase that catalyzes pseudouridylation of RNAs. Acts as a regulator of protein synthesis in embryonic stem cells by mediating pseudouridylation of RNA fragments derived from tRNAs (tRFs): pseudouridylated tRFs inhibit translation by targeting the translation initiation complex. Also catalyzes pseudouridylation of mRNAs: mediates pseudouridylation of mRNAs with the consensus sequence 5'-UGUAG-3'. Acts as a regulator of pre-mRNA splicing by mediating pseudouridylation of pre-mRNAs at locations associated with alternatively spliced regions. Pseudouridylation of pre-mRNAs near splice sites directly regulates mRNA splicing and mRNA 3'-end processing. In addition to mRNAs and tRNAs, binds other types of RNAs, such as snRNAs, Y RNAs and vault RNAs, suggesting that it can catalyze pseudouridylation of many RNA types. In Homo sapiens (Human), this protein is Pseudouridylate synthase 7 homolog.